Consider the following 346-residue polypeptide: Probable dual-specificity RNA methyltransferase RlmN (346 aa).

E92 (proton acceptor) is an active-site residue. Positions 98–332 (TDQRLTVCVS…VSLRASRGLD (235 aa)) constitute a Radical SAM core domain. C105 and C337 form a disulfide bridge. [4Fe-4S] cluster contacts are provided by C112, C116, and C119. Residues 159–160 (GE), S189, 218–220 (SLH), and N294 each bind S-adenosyl-L-methionine. C337 serves as the catalytic S-methylcysteine intermediate.

Belongs to the radical SAM superfamily. RlmN family. [4Fe-4S] cluster is required as a cofactor.

It localises to the cytoplasm. It carries out the reaction adenosine(2503) in 23S rRNA + 2 reduced [2Fe-2S]-[ferredoxin] + 2 S-adenosyl-L-methionine = 2-methyladenosine(2503) in 23S rRNA + 5'-deoxyadenosine + L-methionine + 2 oxidized [2Fe-2S]-[ferredoxin] + S-adenosyl-L-homocysteine. The enzyme catalyses adenosine(37) in tRNA + 2 reduced [2Fe-2S]-[ferredoxin] + 2 S-adenosyl-L-methionine = 2-methyladenosine(37) in tRNA + 5'-deoxyadenosine + L-methionine + 2 oxidized [2Fe-2S]-[ferredoxin] + S-adenosyl-L-homocysteine. In terms of biological role, specifically methylates position 2 of adenine 2503 in 23S rRNA and position 2 of adenine 37 in tRNAs. The polypeptide is Probable dual-specificity RNA methyltransferase RlmN (Synechococcus sp. (strain CC9311)).